The following is a 148-amino-acid chain: MSIIDNRKAFHDYFIEETYEAGLVLEGWEVKAIRAGRANIKEAYVILRGEELFILGMHISALQSASTHVETDPVRTRKLLMHAKEIAKLIGKVERAGFTLVPLDLHYAKGRIKATIGLAKGKKQYDKRESEKERDWERDKARLMRVKT.

A compositionally biased stretch (basic and acidic residues) spans Lys-127–Arg-142. The disordered stretch occupies residues Lys-127–Thr-148.

Belongs to the SmpB family.

It is found in the cytoplasm. Functionally, required for rescue of stalled ribosomes mediated by trans-translation. Binds to transfer-messenger RNA (tmRNA), required for stable association of tmRNA with ribosomes. tmRNA and SmpB together mimic tRNA shape, replacing the anticodon stem-loop with SmpB. tmRNA is encoded by the ssrA gene; the 2 termini fold to resemble tRNA(Ala) and it encodes a 'tag peptide', a short internal open reading frame. During trans-translation Ala-aminoacylated tmRNA acts like a tRNA, entering the A-site of stalled ribosomes, displacing the stalled mRNA. The ribosome then switches to translate the ORF on the tmRNA; the nascent peptide is terminated with the 'tag peptide' encoded by the tmRNA and targeted for degradation. The ribosome is freed to recommence translation, which seems to be the essential function of trans-translation. This is SsrA-binding protein from Aromatoleum aromaticum (strain DSM 19018 / LMG 30748 / EbN1) (Azoarcus sp. (strain EbN1)).